The following is a 141-amino-acid chain: 3-hydroxyacyl-[acyl-carrier-protein] dehydratase FabZ (141 aa).

Histidine 48 is an active-site residue.

Belongs to the thioester dehydratase family. FabZ subfamily.

Its subcellular location is the cytoplasm. The catalysed reaction is a (3R)-hydroxyacyl-[ACP] = a (2E)-enoyl-[ACP] + H2O. Its function is as follows. Involved in unsaturated fatty acids biosynthesis. Catalyzes the dehydration of short chain beta-hydroxyacyl-ACPs and long chain saturated and unsaturated beta-hydroxyacyl-ACPs. The chain is 3-hydroxyacyl-[acyl-carrier-protein] dehydratase FabZ from Bacillus subtilis (strain 168).